Here is a 338-residue protein sequence, read N- to C-terminus: Fructose-1,6-bisphosphatase class 1 1 (338 aa).

The Mg(2+) site is built by Glu-91, Asp-113, Leu-115, and Asp-116. Substrate contacts are provided by residues 116–119 (DGSS), Asn-208, and Lys-274. Residue Glu-280 coordinates Mg(2+).

This sequence belongs to the FBPase class 1 family. In terms of assembly, homotetramer. The cofactor is Mg(2+).

The protein resides in the cytoplasm. The enzyme catalyses beta-D-fructose 1,6-bisphosphate + H2O = beta-D-fructose 6-phosphate + phosphate. It functions in the pathway carbohydrate biosynthesis; gluconeogenesis. This chain is Fructose-1,6-bisphosphatase class 1 1, found in Cupriavidus taiwanensis (strain DSM 17343 / BCRC 17206 / CCUG 44338 / CIP 107171 / LMG 19424 / R1) (Ralstonia taiwanensis (strain LMG 19424)).